Reading from the N-terminus, the 434-residue chain is Trigger factor (434 aa).

The 86-residue stretch at 161–246 (EDRATLDFTG…LKKVEVRELP (86 aa)) folds into the PPIase FKBP-type domain.

It belongs to the FKBP-type PPIase family. Tig subfamily.

It is found in the cytoplasm. It carries out the reaction [protein]-peptidylproline (omega=180) = [protein]-peptidylproline (omega=0). In terms of biological role, involved in protein export. Acts as a chaperone by maintaining the newly synthesized protein in an open conformation. Functions as a peptidyl-prolyl cis-trans isomerase. In Yersinia pseudotuberculosis serotype O:1b (strain IP 31758), this protein is Trigger factor.